The following is a 296-amino-acid chain: MTDLLTLEPTQTILTGSKKTNFGYLESTDGVINFSIVKNIILNGHHHGNVLYVIRNYASKAVCEKLAKNFDYRVTQSGGNRADDGFVLTNQIGATQFSRNGEQYIHEVNRVNQSVADLMKATSAEDSESLFLNLTLEKEFLERGIHFGPARFKNGYACFATFRRWLDNGVMSLMPHEDMAQVDFAKEDGFEIANTQTVTAYNVCLEAAQGGGQLKIWNLIPDQVCRETLGVTRTGYPYPPHLLNETESLSVQLNAGDLYFMNACHLHGVSSVSEGSRLTAGRFIGKLNDRKVVYWT.

Residues histidine 176, aspartate 178, and histidine 267 each coordinate Fe cation.

It belongs to the iron/ascorbate-dependent oxidoreductase family. L-ascorbate is required as a cofactor. Fe(2+) serves as cofactor.

The catalysed reaction is L-isoleucine + 2-oxoglutarate + O2 = 3(1)-hydroxy-L-isoleucine + succinate + CO2. Functionally, catalyzes the hydroxylation of L-isoleucine at the C-4' position to form L-4'-hydroxyisoleucine (4'-HIL). Exhibits low activity with L-valine and L-methionine. This is L-isoleucine 3(1)-dioxygenase from Pantoea ananatis (strain AJ13355).